The chain runs to 118 residues: Large ribosomal subunit protein uL18 (118 aa).

The protein belongs to the universal ribosomal protein uL18 family. As to quaternary structure, part of the 50S ribosomal subunit; part of the 5S rRNA/L5/L18/L25 subcomplex. Contacts the 5S and 23S rRNAs.

This is one of the proteins that bind and probably mediate the attachment of the 5S RNA into the large ribosomal subunit, where it forms part of the central protuberance. The protein is Large ribosomal subunit protein uL18 of Rickettsia peacockii (strain Rustic).